A 271-amino-acid polypeptide reads, in one-letter code: Ribonuclease 3 (271 aa).

Residues 5-139 (PALLELKLDY…IMAAIYLDGG (135 aa)) form the RNase III domain. Glu52 contacts Mg(2+). Residue Asp56 is part of the active site. Asp125 and Glu128 together coordinate Mg(2+). Residue Glu128 is part of the active site. One can recognise a DRBM domain in the interval 172 to 241 (NFKSALQELA…ARGLYERLMG (70 aa)). The interval 241–271 (GDPIVPLPDDSPGDSPDDSGDAAESGVISAT) is disordered. The segment covering 251–261 (SPGDSPDDSGD) has biased composition (acidic residues).

The protein belongs to the ribonuclease III family. Homodimer. Mg(2+) serves as cofactor.

The protein localises to the cytoplasm. The enzyme catalyses Endonucleolytic cleavage to 5'-phosphomonoester.. Functionally, digests double-stranded RNA. Involved in the processing of primary rRNA transcript to yield the immediate precursors to the large and small rRNAs (23S and 16S). Processes some mRNAs, and tRNAs when they are encoded in the rRNA operon. Processes pre-crRNA and tracrRNA of type II CRISPR loci if present in the organism. This Solibacter usitatus (strain Ellin6076) protein is Ribonuclease 3.